A 1411-amino-acid chain; its full sequence is DNA-directed RNA polymerase subunit beta' (1411 aa).

4 residues coordinate Zn(2+): Cys-70, Cys-72, Cys-85, and Cys-88. Asp-460, Asp-462, and Asp-464 together coordinate Mg(2+). Zn(2+)-binding residues include Cys-814, Cys-889, Cys-896, and Cys-899. The segment covering 1387–1399 (RSTSSGTEITSPS) has biased composition (polar residues). The segment at 1387–1411 (RSTSSGTEITSPSKDAIPLGSKVGF) is disordered.

It belongs to the RNA polymerase beta' chain family. The RNAP catalytic core consists of 2 alpha, 1 beta, 1 beta' and 1 omega subunit. When a sigma factor is associated with the core the holoenzyme is formed, which can initiate transcription. It depends on Mg(2+) as a cofactor. The cofactor is Zn(2+).

It catalyses the reaction RNA(n) + a ribonucleoside 5'-triphosphate = RNA(n+1) + diphosphate. DNA-dependent RNA polymerase catalyzes the transcription of DNA into RNA using the four ribonucleoside triphosphates as substrates. In Xylella fastidiosa (strain M12), this protein is DNA-directed RNA polymerase subunit beta'.